A 390-amino-acid chain; its full sequence is Endothelial cell-selective adhesion molecule (390 aa).

The N-terminal stretch at 1-29 (MISLPGPLVTNLLRFLFLGLSALAPPSRA) is a signal peptide. Residues 30 to 143 (ELQLHLPANQ…NGQASGHSIK (114 aa)) enclose the Ig-like V-type domain. Residues 30-248 (ELQLHLPANQ…LEVSTGPGAA (219 aa)) are Extracellular-facing. N-linked (GlcNAc...) asparagine glycans are attached at residues Asn108, Asn169, Asn213, and Asn236. The region spanning 156–242 (PSCRLQGVPR…AQCNVTLEVS (87 aa)) is the Ig-like C2-type domain. Cys174 and Cys224 are oxidised to a cystine. Residues 249–269 (VVAGAVVGTLVGLGLLAGLVL) traverse the membrane as a helical segment. At 270-390 (LYHRRGKALE…PAQSQAGSLV (121 aa)) the chain is on the cytoplasmic side. At Ser301 the chain carries Phosphoserine. The disordered stretch occupies residues 316-365 (ARALRPPHGPPRPGALTPTPSLSSQALPSPRLPTTDGANPQPISLIPGGV). 2 positions are modified to phosphothreonine: Thr332 and Thr334. Residues 333 to 342 (PTPSLSSQAL) are compositionally biased toward polar residues. Ser336, Ser339, Ser344, and Ser371 each carry phosphoserine.

Interacts with MAGI1.

It is found in the cell junction. The protein resides in the adherens junction. The protein localises to the tight junction. It localises to the cell membrane. Functionally, can mediate aggregation most likely through a homophilic molecular interaction. The polypeptide is Endothelial cell-selective adhesion molecule (ESAM) (Macaca fascicularis (Crab-eating macaque)).